We begin with the raw amino-acid sequence, 1171 residues long: ATP-dependent helicase/deoxyribonuclease subunit B (1171 aa).

In terms of domain architecture, UvrD-like helicase ATP-binding spans 1 to 390; sequence MSLRFVIGRA…HPLVECIRSA (390 aa). An ATP-binding site is contributed by 8–15; it reads GRAGSGKS. Residues 281-587 form the UvrD-like helicase C-terminal domain; sequence MEQPRFHSPA…QFANIPPSLD (307 aa). 4 residues coordinate [4Fe-4S] cluster: C805, C1129, C1132, and C1138.

The protein belongs to the helicase family. AddB/RexB type 1 subfamily. As to quaternary structure, heterodimer of AddA and AddB. Mg(2+) is required as a cofactor. Requires [4Fe-4S] cluster as cofactor.

Functionally, the heterodimer acts as both an ATP-dependent DNA helicase and an ATP-dependent, dual-direction single-stranded exonuclease. Recognizes the chi site generating a DNA molecule suitable for the initiation of homologous recombination. The AddB subunit has 5' -&gt; 3' nuclease activity but not helicase activity. This chain is ATP-dependent helicase/deoxyribonuclease subunit B, found in Bacillus cereus (strain ATCC 10987 / NRS 248).